Consider the following 389-residue polypeptide: Type 2 DNA topoisomerase 6 subunit A (389 aa).

One can recognise a Topo IIA-type catalytic domain in the interval 13–161 (KARLRAAEVM…MLILSKEKGK (149 aa)). Catalysis depends on tyrosine 107, which acts as the O-(5'-phospho-DNA)-tyrosine intermediate. Mg(2+)-binding residues include glutamate 208 and aspartate 260.

It belongs to the TOP6A family. As to quaternary structure, homodimer. Heterotetramer of two Top6A and two Top6B chains. Mg(2+) is required as a cofactor.

It carries out the reaction ATP-dependent breakage, passage and rejoining of double-stranded DNA.. In terms of biological role, relaxes both positive and negative superturns and exhibits a strong decatenase activity. The chain is Type 2 DNA topoisomerase 6 subunit A from Aeropyrum pernix (strain ATCC 700893 / DSM 11879 / JCM 9820 / NBRC 100138 / K1).